The chain runs to 251 residues: Myozenin-3 (251 aa).

Phosphoserine is present on serine 31. Residues 50–67 (LLFQKRQRRVQKFTFELA) are binding to ACTN2, PPP3CA and TCAP. Positions 67-110 (AASQRAMLAGSARRKVTGTAESGTVANANGPEGPNYRSELHIFP) are binding to FLNC. The segment at 79 to 102 (RRKVTGTAESGTVANANGPEGPNY) is disordered. The tract at residues 186–207 (PSPNDYRNFNKTPVPFGGPLVG) is binding to ACTN2.

It belongs to the myozenin family. Interacts with ACTN2, LDB3, FLNC, PPP3CA and TCAP. In terms of tissue distribution, expressed specifically in skeletal muscle. Not detected in heart.

The protein resides in the cytoplasm. The protein localises to the myofibril. Its subcellular location is the sarcomere. It localises to the z line. In terms of biological role, myozenins may serve as intracellular binding proteins involved in linking Z line proteins such as alpha-actinin, gamma-filamin, TCAP/telethonin, LDB3/ZASP and localizing calcineurin signaling to the sarcomere. Plays an important role in the modulation of calcineurin signaling. May play a role in myofibrillogenesis. The chain is Myozenin-3 from Homo sapiens (Human).